An 841-amino-acid chain; its full sequence is Transcription regulator protein BACH2 (841 aa).

Positions Cys37–Arg103 constitute a BTB domain. 3 disordered regions span residues His153 to Ser173, Glu204 to Thr226, and Ser246 to Leu329. Acidic residues predominate over residues Ala160 to Asp172. Composition is skewed to basic and acidic residues over residues Thr214–Ala224 and Pro298–Gln313. Phosphoserine is present on Ser315. Residues Lys382 and Lys421 each participate in a glycyl lysine isopeptide (Lys-Gly) (interchain with G-Cter in SUMO2) cross-link. Position 521 is a phosphoserine; by RPS6KB1 (Ser521). The tract at residues Gln583–Gly610 is disordered. The segment covering Ser584 to Glu598 has biased composition (polar residues). The bZIP domain occupies Phe646–Leu709. The basic motif stretch occupies residues Arg651 to Lys667. The interval Ile671 to Ile678 is leucine-zipper. The interval Pro777–Gln816 is disordered. A Nuclear export signal motif is present at residues Asp821–Thr841.

It belongs to the bZIP family. CNC subfamily. Homodimer; disulfide-linked. Heterodimer of BACH2 and Maf-related transcription factors. In terms of processing, phosphorylation at Ser-521 downstream of the PI-3K pathway promotes nuclear export. Post-translationally, the reversible disulfide bond may provide a mechanism to regulate the activity in oxidative stress responses. As to expression, B-cell specific.

The protein localises to the cytoplasm. Its subcellular location is the nucleus. Functionally, transcriptional regulator that acts as a repressor or activator. Binds to Maf recognition elements (MARE). Plays an important role in coordinating transcription activation and repression by MAFK. Induces apoptosis in response to oxidative stress through repression of the antiapoptotic factor HMOX1. Positively regulates the nuclear import of actin. Is a key regulator of adaptive immunity, crucial for the maintenance of regulatory T-cell function and B-cell maturation. The protein is Transcription regulator protein BACH2 (BACH2) of Homo sapiens (Human).